The sequence spans 362 residues: MQEEITTNREKIDLKNLSQDQLVEFAEKLGQPAFRGRQIMSWLYRPEVRDFEQMTDLAKVFRKLLAENSFFSHFDDPIIERAKDGCVKFGFRLHDGHVIETVLIPEPDRNTLCISSQVGCAMKCTFCMTGGMGFTRNLTPSEIVNQVCAARDFLANEPADKLIGPDRVTNVVYMGMGEPLNNLENVLTSISILTEQKGLDLTGRRITVSTCGIVANMARLGQEAPVNLAISLHAVDDKTRDMLMPVNNRYPLDELLEACRTYPMGKRRRIMFEYIMLAGINDSDTEARTLARKLQEIPCKINLIPYNESPGLPYKSPGMKRILSFQNILREANYSVFIRNSRGEDIAAACGQLATDETTKQS.

Glu100 acts as the Proton acceptor in catalysis. The region spanning Glu106–Asp345 is the Radical SAM core domain. Cys113 and Cys350 form a disulfide bridge. Positions 120, 124, and 127 each coordinate [4Fe-4S] cluster. Residues Gly177 to Glu178, Ser209, Ser231 to His233, and Asn307 contribute to the S-adenosyl-L-methionine site. Catalysis depends on Cys350, which acts as the S-methylcysteine intermediate.

This sequence belongs to the radical SAM superfamily. RlmN family. It depends on [4Fe-4S] cluster as a cofactor.

It localises to the cytoplasm. It catalyses the reaction adenosine(2503) in 23S rRNA + 2 reduced [2Fe-2S]-[ferredoxin] + 2 S-adenosyl-L-methionine = 2-methyladenosine(2503) in 23S rRNA + 5'-deoxyadenosine + L-methionine + 2 oxidized [2Fe-2S]-[ferredoxin] + S-adenosyl-L-homocysteine. It carries out the reaction adenosine(37) in tRNA + 2 reduced [2Fe-2S]-[ferredoxin] + 2 S-adenosyl-L-methionine = 2-methyladenosine(37) in tRNA + 5'-deoxyadenosine + L-methionine + 2 oxidized [2Fe-2S]-[ferredoxin] + S-adenosyl-L-homocysteine. In terms of biological role, specifically methylates position 2 of adenine 2503 in 23S rRNA and position 2 of adenine 37 in tRNAs. m2A2503 modification seems to play a crucial role in the proofreading step occurring at the peptidyl transferase center and thus would serve to optimize ribosomal fidelity. The protein is Dual-specificity RNA methyltransferase RlmN of Desulfotalea psychrophila (strain LSv54 / DSM 12343).